Reading from the N-terminus, the 175-residue chain is Endoribonuclease YbeY (175 aa).

Zn(2+) is bound by residues His-129, His-133, and His-139.

Belongs to the endoribonuclease YbeY family. Zn(2+) is required as a cofactor.

It localises to the cytoplasm. Its function is as follows. Single strand-specific metallo-endoribonuclease involved in late-stage 70S ribosome quality control and in maturation of the 3' terminus of the 16S rRNA. The polypeptide is Endoribonuclease YbeY (Lactobacillus johnsonii (strain CNCM I-12250 / La1 / NCC 533)).